Reading from the N-terminus, the 575-residue chain is Potassium-transporting ATPase potassium-binding subunit (575 aa).

A run of 12 helical transmembrane segments spans residues 4-24, 61-81, 133-153, 180-200, 258-278, 289-309, 344-364, 372-392, 394-414, 431-451, 499-519, and 545-565; these read SAWGLLALFLAALLVLAWPVG, LRYAIALLAFNAVGAVFVYAL, GLAVQNFFSAATGIAVAFALI, LWVLVPLSFVLAVFFVSQGVI, LANLLQMIAVFLIPAALCFAF, WAVLAAMTVMFVAAVMVVIPA, IDASALFAAVTTAASCGAVIA, LGGMVPMVLMQLGEVVFGGVG, GLYGMLIFAMLAVFIAGLMIG, LISIAILVTPVLVLAGTAVAV, LLGLAMWLGRFAVIVPVLAIA, and LLIGTVLLVGLLNYVPALALG.

This sequence belongs to the KdpA family. The system is composed of three essential subunits: KdpA, KdpB and KdpC.

Its subcellular location is the cell inner membrane. Functionally, part of the high-affinity ATP-driven potassium transport (or Kdp) system, which catalyzes the hydrolysis of ATP coupled with the electrogenic transport of potassium into the cytoplasm. This subunit binds the periplasmic potassium ions and delivers the ions to the membrane domain of KdpB through an intramembrane tunnel. The polypeptide is Potassium-transporting ATPase potassium-binding subunit (Variovorax paradoxus (strain S110)).